A 777-amino-acid chain; its full sequence is MAMVTARQFLASAAELGSGRRRCGGGGACDMREDGGVEALMQCQRVSNLLIAASFLSIPLELFYFATCADLSEVKCAVLHFCAFIVLCGATHLLAAFTHAHPHSAPLLRALTAAKVLAAVASSAAAVSLLTFIPKLLRIKVRESLLRDKASRLHRDLGLVRRREEATSRAVRELTGRIRASPPDAHAILRTTALQLADALGLHACAVWMPAAGRPHDLVLVHHLTSRPDDAADLLLEVGDACTVAADDPDVVDVMASKVAKVLEPDSALAMASSVGAAPAGAVAAIRIPILRVSIYDGGGTPEVTEASYAILVLLLPPHDAAGGWSSHDLEIVQVVADQAAVALSHAAVLEESRSMRDRFAEQHRALMQAKHRAAMATRAFSSIQSAMCHAMRRPVHSIVGLVSMLQHPEADTMRPEQRLAVDAIARTSNLLSALMDEVIVNRQHLSVQRKPFSLHALIKEAISVAGCLSHCGGAGFLHQLECALPEWVVGDERRVFHLLLDMVGTLLNRCNTESGACRLSFSIRICNVGEERYSLDWIPMRPTFSGCNVCVKFKVGIGRSRSCAIERSLPCELPRRSAATTSSQMGHIFSGYFNKIVQMMNGNMWSASDSEGVGESVTLILQFKLQQGHVEASPPYIPHLNGLRVLLADDDAMNRGVTKKILERLGCQVMSAPSGAHCLSLLASAEASFQLVVLDLDDRAVPSAAMDGFEVALRIRELRYSCWLLIVIAVAAGVVATDDGGAVQELCQRAGINGLVQKPVTLPALGAQLCRVLQDN.

Helical transmembrane passes span 49-69 (LLIAASFLSIPLELFYFATCA), 77-97 (AVLHFCAFIVLCGATHLLAAF), and 113-133 (AAKVLAAVASSAAAVSLLTFI). Cu cation-binding residues include C88 and H92. One can recognise a GAF domain in the interval 184 to 344 (DAHAILRTTA…VVADQAAVAL (161 aa)). Residues 387-521 (AMCHAMRRPV…NTESGACRLS (135 aa)) enclose the Histidine kinase domain. H390 carries the post-translational modification Phosphohistidine; by autocatalysis. In terms of domain architecture, Response regulatory spans 645-774 (RVLLADDDAM…ALGAQLCRVL (130 aa)). At D696 the chain carries 4-aspartylphosphate.

This sequence belongs to the ethylene receptor family. It depends on Cu cation as a cofactor.

The protein resides in the endoplasmic reticulum membrane. The enzyme catalyses ATP + protein L-histidine = ADP + protein N-phospho-L-histidine.. In terms of biological role, ethylene receptor related to bacterial two-component regulators. Acts as a redundant negative regulator of ethylene signaling. The sequence is that of Ethylene receptor 4 from Oryza sativa subsp. indica (Rice).